Consider the following 89-residue polypeptide: Large ribosomal subunit protein uL23c (89 aa).

Belongs to the universal ribosomal protein uL23 family. As to quaternary structure, part of the 50S ribosomal subunit.

The protein resides in the plastid. The protein localises to the chloroplast. Its function is as follows. Binds to 23S rRNA. The protein is Large ribosomal subunit protein uL23c (rpl23) of Staurastrum punctulatum (Green alga).